Reading from the N-terminus, the 605-residue chain is Microtubule-associated protein VP10 (605 aa).

Interacts with VP1.

Its subcellular location is the virion. It localises to the host cytoplasm. The protein localises to the host cytoskeleton. Its function is as follows. Minor inner capsid component. Displays NTPase and RNA 5'-triphosphatase (RTPase) activities. May function as a cofactor of polymerase VP1. Associates with microtubules and plays a role in the formation, structural organization and morphology of viral inclusions, where the assembly of cores and the replication of viral RNA occur. In Colorado tick fever virus (strain USA/Florio N-7180) (CTFV), this protein is Microtubule-associated protein VP10.